We begin with the raw amino-acid sequence, 312 residues long: Elongation factor Ts (312 aa).

Residues 80–83 (TDFV) form an involved in Mg(2+) ion dislocation from EF-Tu region.

It belongs to the EF-Ts family.

The protein resides in the cytoplasm. Functionally, associates with the EF-Tu.GDP complex and induces the exchange of GDP to GTP. It remains bound to the aminoacyl-tRNA.EF-Tu.GTP complex up to the GTP hydrolysis stage on the ribosome. This chain is Elongation factor Ts, found in Maricaulis maris (strain MCS10) (Caulobacter maris).